The chain runs to 287 residues: Inorganic pyrophosphatase (287 aa).

Arginine 79 contacts diphosphate. The Mg(2+) site is built by aspartate 116, aspartate 121, and aspartate 153.

The protein belongs to the PPase family. Homodimer. Requires Mg(2+) as cofactor.

The protein localises to the cytoplasm. It carries out the reaction diphosphate + H2O = 2 phosphate + H(+). This chain is Inorganic pyrophosphatase (IPP1), found in Kluyveromyces lactis (strain ATCC 8585 / CBS 2359 / DSM 70799 / NBRC 1267 / NRRL Y-1140 / WM37) (Yeast).